A 636-amino-acid polypeptide reads, in one-letter code: Topoisomerase I damage affected protein 7 (636 aa).

Residues 1–18 (MNSNSTIGRTTLGESDTI) are compositionally biased toward polar residues. Disordered regions lie at residues 1–33 (MNSN…NSRS), 87–109 (TLVS…QYDP), 238–271 (ISSP…SSTN), 299–326 (PTSS…DDTT), and 339–362 (QSTT…STSP). Asn-4 is a glycosylation site (N-linked (GlcNAc...) asparagine). Composition is skewed to low complexity over residues 19-33 (SLSF…NSRS) and 87-108 (TLVS…SQYD). N-linked (GlcNAc...) asparagine glycosylation is present at Asn-257. Residues 457–477 (IVGSVVGSVGGILICVLVVWF) form a helical membrane-spanning segment. N-linked (GlcNAc...) asparagine glycosylation is present at Asn-492. Polar residues predominate over residues 510–541 (QAKEASLQAQDSGSQQRNTETASANNPFSNEF). Positions 510-551 (QAKEASLQAQDSGSQQRNTETASANNPFSNEFNFKARGNPPP) are disordered. Lys-512 participates in a covalent cross-link: Glycyl lysine isopeptide (Lys-Gly) (interchain with G-Cter in ubiquitin). Asn-557, Asn-562, and Asn-626 each carry an N-linked (GlcNAc...) asparagine glycan. The residue at position 628 (Ser-628) is a Phosphoserine.

This sequence belongs to the TDA7 family.

It localises to the vacuole membrane. In Saccharomyces cerevisiae (strain YJM789) (Baker's yeast), this protein is Topoisomerase I damage affected protein 7 (TDA7).